We begin with the raw amino-acid sequence, 146 residues long: Acidic phospholipase A2 S13-69J (146 aa).

The signal sequence occupies residues 1-19; that stretch reads MYPAHLLVLLAVCVSLLGA. A propeptide spanning residues 20-27 is cleaved from the precursor; sequence ASIPPQPL. 7 disulfide bridges follow: C38–C98, C54–C145, C56–C72, C71–C126, C78–C119, C87–C112, and C105–C117. Residues Y55, G57, and G59 each coordinate Ca(2+). H75 is an active-site residue. A Ca(2+)-binding site is contributed by D76. Residue D120 is part of the active site.

Belongs to the phospholipase A2 family. Group I subfamily. D49 sub-subfamily. Ca(2+) is required as a cofactor. Expressed by the venom gland.

Its subcellular location is the secreted. It carries out the reaction a 1,2-diacyl-sn-glycero-3-phosphocholine + H2O = a 1-acyl-sn-glycero-3-phosphocholine + a fatty acid + H(+). In terms of biological role, snake venom phospholipase A2 (PLA2) that inhibits collagen-induced platelet aggregation. PLA2 catalyzes the calcium-dependent hydrolysis of the 2-acyl groups in 3-sn-phosphoglycerides. This Austrelaps superbus (Lowland copperhead snake) protein is Acidic phospholipase A2 S13-69J.